The primary structure comprises 272 residues: Regulatory factor X-associated protein (272 aa).

3 disordered regions span residues 1 to 20 (MEAQ…GVPH), 74 to 142 (LCEG…KTCT), and 175 to 195 (KKKK…GSAG). Over residues 79–94 (GDGEEEAGEDEADLLD) the composition is skewed to acidic residues. The Nuclear localization signal motif lies at 163 to 178 (KKHRNKMYKDKYKKKK). Lys198 is covalently cross-linked (Glycyl lysine isopeptide (Lys-Gly) (interchain with G-Cter in SUMO2)). A C-terminal domain region spans residues 214-270 (TGSFGDRPARPTLLEQVLNQKRLSLLRSPEVVQFLQKQQQLLNQQVLEQRQQQFPGT).

In terms of assembly, the RFX heterotetrameric complex consists of 2 molecules of RFX5 and one each of RFXAP and RFX-B/RFXANK; with each subunit representing a separate complementation group. RFX forms cooperative DNA binding complexes with X2BP and CBF/NF-Y. RFX associates with CIITA to form an active transcriptional complex. Phosphorylated. As to expression, ubiquitous.

It is found in the nucleus. Its function is as follows. Part of the RFX complex that binds to the X-box of MHC II promoters. The sequence is that of Regulatory factor X-associated protein (RFXAP) from Homo sapiens (Human).